The sequence spans 629 residues: Phosphomethylpyrimidine synthase (629 aa).

The interval 1–30 is disordered; it reads MTTKLKNASNLSESAQVDQQSVQPFTRSQK. Substrate is bound by residues Asn233, Met262, Tyr291, His327, 347–349, 388–391, and Glu427; these read SRG and DGLR. His431 lines the Zn(2+) pocket. A substrate-binding site is contributed by Tyr454. His495 serves as a coordination point for Zn(2+). Residues Cys575, Cys578, and Cys583 each contribute to the [4Fe-4S] cluster site.

The protein belongs to the ThiC family. Homodimer. Requires [4Fe-4S] cluster as cofactor.

The enzyme catalyses 5-amino-1-(5-phospho-beta-D-ribosyl)imidazole + S-adenosyl-L-methionine = 4-amino-2-methyl-5-(phosphooxymethyl)pyrimidine + CO + 5'-deoxyadenosine + formate + L-methionine + 3 H(+). It functions in the pathway cofactor biosynthesis; thiamine diphosphate biosynthesis. Its function is as follows. Catalyzes the synthesis of the hydroxymethylpyrimidine phosphate (HMP-P) moiety of thiamine from aminoimidazole ribotide (AIR) in a radical S-adenosyl-L-methionine (SAM)-dependent reaction. This is Phosphomethylpyrimidine synthase from Pseudomonas fluorescens (strain ATCC BAA-477 / NRRL B-23932 / Pf-5).